We begin with the raw amino-acid sequence, 119 residues long: uncharacterized protein (119 aa).

This is an uncharacterized protein from Bos taurus (Bovine).